Consider the following 92-residue polypeptide: Endoribonuclease HigB (92 aa).

H92 is a catalytic residue.

In terms of assembly, forms a complex with the antitoxin HigA which inhibits the mRNA interferase activity. The heterodimer dimerizes to form a HigB-(HigA)2-HigB tetramer that is able to bind to the DNA.

In terms of biological role, toxic component of a type II toxin-antitoxin (TA) system. A ribosome-associated translation-dependent mRNA interferase. Inhibits translation by sequence-specific cleavage of mRNA. Prefers either in-frame or out-of-frame 5'-AAA-3' codons (lysine). Also cleaves the first three AAAs of stretches of four or more A sequences. 20% of codons containing AA are cleaved and occassionally cuts even at a single A. This is Endoribonuclease HigB from Proteus vulgaris.